We begin with the raw amino-acid sequence, 198 residues long: Charged multivesicular body protein 1a (198 aa).

2 coiled-coil regions span residues 7–41 (QLKF…QQKN) and 176–198 (GETS…ALRN). The disordered stretch occupies residues 171 to 198 (GASALGETSARAQEKEDQLSRRLAALRN). The MIT-interacting motif signature appears at 187-197 (DQLSRRLAALR).

Belongs to the SNF7 family. Probable peripherally associated component of the endosomal sorting required for transport complex III (ESCRT-III).

The protein resides in the cytoplasm. It is found in the endosome membrane. Probable peripherally associated component of the endosomal sorting required for transport complex III (ESCRT-III) which is involved in multivesicular bodies (MVBs) formation and sorting of endosomal cargo proteins into MVBs. MVBs contain intraluminal vesicles (ILVs) that are generated by invagination and scission from the limiting membrane of the endosome and mostly are delivered to lysosomes enabling degradation of membrane proteins, such as stimulated growth factor receptors, lysosomal enzymes and lipids. The polypeptide is Charged multivesicular body protein 1a (chmp1a) (Danio rerio (Zebrafish)).